The sequence spans 369 residues: Peptide chain release factor subunit 1 (369 aa).

The protein belongs to the eukaryotic release factor 1 family. In terms of assembly, heterodimer of two subunits, one of which binds GTP.

The protein localises to the cytoplasm. Its function is as follows. Directs the termination of nascent peptide synthesis (translation) in response to the termination codons UAA, UAG and UGA. The polypeptide is Peptide chain release factor subunit 1 (prf1) (Saccharolobus solfataricus (strain ATCC 35092 / DSM 1617 / JCM 11322 / P2) (Sulfolobus solfataricus)).